The chain runs to 461 residues: Dihydrolipoyl dehydrogenase (461 aa).

Residues 33–41, Lys50, and Ala112 each bind FAD; that span reads EAAEVGGVC. Cys41 and Cys46 are joined by a disulfide. NAD(+) contacts are provided by residues 173 to 177, Glu196, and 263 to 266; these read GGGAV and AVGR. The FAD site is built by Asp306 and Ala314. The Proton acceptor role is filled by His437.

This sequence belongs to the class-I pyridine nucleotide-disulfide oxidoreductase family. In terms of assembly, homodimer. FAD serves as cofactor.

The protein localises to the membrane. It carries out the reaction N(6)-[(R)-dihydrolipoyl]-L-lysyl-[protein] + NAD(+) = N(6)-[(R)-lipoyl]-L-lysyl-[protein] + NADH + H(+). Its function is as follows. Has chromate reductase activity. This is Dihydrolipoyl dehydrogenase from Thermus scotoductus (strain ATCC 700910 / SA-01).